A 416-amino-acid polypeptide reads, in one-letter code: 4-hydroxy-3-methylbut-2-en-1-yl diphosphate synthase (flavodoxin) (416 aa).

[4Fe-4S] cluster contacts are provided by Cys304, Cys307, Cys350, and Glu357.

It belongs to the IspG family. [4Fe-4S] cluster serves as cofactor.

It catalyses the reaction (2E)-4-hydroxy-3-methylbut-2-enyl diphosphate + oxidized [flavodoxin] + H2O + 2 H(+) = 2-C-methyl-D-erythritol 2,4-cyclic diphosphate + reduced [flavodoxin]. Its pathway is isoprenoid biosynthesis; isopentenyl diphosphate biosynthesis via DXP pathway; isopentenyl diphosphate from 1-deoxy-D-xylulose 5-phosphate: step 5/6. Its function is as follows. Converts 2C-methyl-D-erythritol 2,4-cyclodiphosphate (ME-2,4cPP) into 1-hydroxy-2-methyl-2-(E)-butenyl 4-diphosphate. The chain is 4-hydroxy-3-methylbut-2-en-1-yl diphosphate synthase (flavodoxin) from Rhizobium etli (strain ATCC 51251 / DSM 11541 / JCM 21823 / NBRC 15573 / CFN 42).